The chain runs to 615 residues: MSKYTILDKINTPSDLKLIPESQLKILSAELRAFLVDTLDVSGGHFASSLGATELTVALHYVYNAPYDNIVWDVGHQTYIHKILTGRKDKLVTIKKDGGISGFPKRSESEYDTFGVGHSSTSISAALGMAIADRLQGKSSNTVAVIGDGAITGGMAFEALNHAGGIKEDILVILNDNEMSISDNVGGLSAHFSKIISGGFYNSIREKGKEVLKNIPPIFEFVKKVETQTKGMFVPANFFEDLGFYYVGPIDGHDVTELVKTLRILKDHKGPKLLHVITKKGKGYTKAESDPIKFHHVAPSFHSGENITTKISKPTYSNIFGDWICQKAAKDKRLVGITPAMKEGSDLIRFSQLYPHRYFDVAIAEQHAVTFAGGLACQGLKPVVAIYSTFLQRAYDQVIHDIALQNLDVLYAVDRAGLVGADGATHDGSFDLAFMRCIPNHVIMTPSDENEAYHMLEFGYEYNGPAMVRYPRGAGIGAEITGSLDLELGKAKIVKQGSKIAILNFGTLLPLAKQLAEKYHATVIDMRFVKPLDEIMLDKVSQTHEIILTLEENCIAGGAGSAVNEYFVAKDLSNKIIVRNFGLQDKFLNHGTKDLLLAQSKLCVENISQELDKLI.

Thiamine diphosphate-binding positions include histidine 76 and 117 to 119; that span reads GHS. A Mg(2+)-binding site is contributed by aspartate 148. Residues 149–150, asparagine 177, tyrosine 284, and glutamate 365 each bind thiamine diphosphate; that span reads GA. Asparagine 177 contacts Mg(2+).

This sequence belongs to the transketolase family. DXPS subfamily. As to quaternary structure, homodimer. Requires Mg(2+) as cofactor. The cofactor is thiamine diphosphate.

It carries out the reaction D-glyceraldehyde 3-phosphate + pyruvate + H(+) = 1-deoxy-D-xylulose 5-phosphate + CO2. The protein operates within metabolic intermediate biosynthesis; 1-deoxy-D-xylulose 5-phosphate biosynthesis; 1-deoxy-D-xylulose 5-phosphate from D-glyceraldehyde 3-phosphate and pyruvate: step 1/1. Functionally, catalyzes the acyloin condensation reaction between C atoms 2 and 3 of pyruvate and glyceraldehyde 3-phosphate to yield 1-deoxy-D-xylulose-5-phosphate (DXP). This is 1-deoxy-D-xylulose-5-phosphate synthase from Francisella tularensis subsp. tularensis (strain FSC 198).